A 63-amino-acid chain; its full sequence is Large ribosomal subunit protein bL28 (63 aa).

It belongs to the bacterial ribosomal protein bL28 family.

This chain is Large ribosomal subunit protein bL28, found in Geotalea uraniireducens (strain Rf4) (Geobacter uraniireducens).